We begin with the raw amino-acid sequence, 301 residues long: Mycothiol acetyltransferase (301 aa).

N-acetyltransferase domains are found at residues 7–150 (VDWQ…PPVD) and 152–301 (VRFA…AVEG). Asp39 is a binding site for 1D-myo-inositol 2-(L-cysteinylamino)-2-deoxy-alpha-D-glucopyranoside. Residues 80–82 (LVV) and 88–93 (RRGIGS) contribute to the acetyl-CoA site. Residues Glu179, Lys220, and Glu228 each contribute to the 1D-myo-inositol 2-(L-cysteinylamino)-2-deoxy-alpha-D-glucopyranoside site. Residue 232 to 234 (VGV) coordinates acetyl-CoA. Tyr271 serves as a coordination point for 1D-myo-inositol 2-(L-cysteinylamino)-2-deoxy-alpha-D-glucopyranoside. 276–281 (NTAAVK) contributes to the acetyl-CoA binding site.

This sequence belongs to the acetyltransferase family. MshD subfamily. Monomer.

The enzyme catalyses 1D-myo-inositol 2-(L-cysteinylamino)-2-deoxy-alpha-D-glucopyranoside + acetyl-CoA = mycothiol + CoA + H(+). In terms of biological role, catalyzes the transfer of acetyl from acetyl-CoA to desacetylmycothiol (Cys-GlcN-Ins) to form mycothiol. In Mycolicibacterium vanbaalenii (strain DSM 7251 / JCM 13017 / BCRC 16820 / KCTC 9966 / NRRL B-24157 / PYR-1) (Mycobacterium vanbaalenii), this protein is Mycothiol acetyltransferase.